Reading from the N-terminus, the 185-residue chain is MNNQSKRLWIEPIQGSRRKSNFFFASILFGGALGFFLVGFSSYLGRNLLPLLSSQQIIFVPQGIVMCFYGIAGLFFSSYLWCTIFFNVGSGYNQIDEKTGIVCLFRWGFPGRNRRIFLRFPLKNVHMIKMEVQENLFSSRHILYMKVKGLPDIPLARTGENLNLKEMEQKAAELARFLHVSIEGF.

2 helical membrane-spanning segments follow: residues 22-42 and 57-77; these read FFFASILFGGALGFFLVGFSS and IIFVPQGIVMCFYGIAGLFFS.

The protein belongs to the Ycf4 family.

The protein localises to the plastid. It is found in the chloroplast thylakoid membrane. Functionally, seems to be required for the assembly of the photosystem I complex. In Welwitschia mirabilis (Tree tumbo), this protein is Photosystem I assembly protein Ycf4.